The primary structure comprises 124 residues: Histone H2B, embryonic (124 aa).

Residues 1–31 are disordered; sequence MAPTAQVAKKGSKKAVKGTKTAXGGKKRNRK. A glycan (O-linked (GlcNAc) serine) is linked at Ser-111. Lys-119 participates in a covalent cross-link: Glycyl lysine isopeptide (Lys-Gly) (interchain with G-Cter in ubiquitin).

Belongs to the histone H2B family. As to quaternary structure, the nucleosome is a histone octamer containing two molecules each of H2A, H2B, H3 and H4 assembled in one H3-H4 heterotetramer and two H2A-H2B heterodimers. The octamer wraps approximately 147 bp of DNA. In terms of processing, monoubiquitination of Lys-119 gives a specific tag for epigenetic transcriptional activation and is also prerequisite for histone H3 'Lys-4' and 'Lys-79' methylation. GlcNAcylation at Ser-111 promotes monoubiquitination of Lys-119. It fluctuates in response to extracellular glucose, and associates with transcribed genes.

The protein localises to the nucleus. Its subcellular location is the chromosome. Functionally, core component of nucleosome. Nucleosomes wrap and compact DNA into chromatin, limiting DNA accessibility to the cellular machineries which require DNA as a template. Histones thereby play a central role in transcription regulation, DNA repair, DNA replication and chromosomal stability. DNA accessibility is regulated via a complex set of post-translational modifications of histones, also called histone code, and nucleosome remodeling. The sequence is that of Histone H2B, embryonic from Strongylocentrotus purpuratus (Purple sea urchin).